A 1165-amino-acid polypeptide reads, in one-letter code: DNA-directed RNA polymerase subunit beta (1165 aa).

It belongs to the RNA polymerase beta chain family. The RNAP catalytic core consists of 2 alpha, 1 beta, 1 beta' and 1 omega subunit. When a sigma factor is associated with the core the holoenzyme is formed, which can initiate transcription.

It carries out the reaction RNA(n) + a ribonucleoside 5'-triphosphate = RNA(n+1) + diphosphate. In terms of biological role, DNA-dependent RNA polymerase catalyzes the transcription of DNA into RNA using the four ribonucleoside triphosphates as substrates. This chain is DNA-directed RNA polymerase subunit beta, found in Leifsonia xyli subsp. xyli (strain CTCB07).